A 789-amino-acid chain; its full sequence is MEFNLDNFRLRKYSKITKKILALGKKYQTLTDDQLRIKTETLRNKLVKGASLDSILIEAYATIREADFRVLGLKPFENQVLGAVVLHYGNVAQMNTGEGKTLTATMPLYLNGLTGPGNFLVTVNSYLANRDAEEIGKVYKWMGLTCASGVSLDDEELDKKAIYQNDIVYTTNSELGFDYLTDNLVDNINKKKLNDLNFALVDEVDSVLLDLAQTPLVISGAPRVQSNLFVSTDRIVKSLKPNVDFEFSEDLKDVWFTQTGIEQLEEYLGIQGLISDKWSDFYRHLVLALKANYVMKRNQDYIVTNREVLLLDSENGRALTGMKLEAGIHQAIEAKEEVELSDQTRSMASITLQNFFKMFRKLSGMTGTAKSSAREFLEVYNLPVLKIPTHKPNIRIDHADVVFATMDEKIEATVRMVKAAYQIKRPVLLKTGSLSLSRLYSRVLLEHGIVHNVLNAQSESKEAMIVASAGKSGAITVATSMAGRGTDIKLGKGVKEKGGLLVIGTERMDSRRVDDQLRGRAGRQGDPGESIFLVSLDDKVVIENAPDWVEKYRLKLEQAVEQGKRKYGAPLKGRRARKIVEKAQQAADSAAEESRKNAVKMDDILRIQRELIYDFRDYIMKSTDLTTMVQQIKNDYFNAIARENKKDAGKLLDFIINNVDYNYMDNDFNPEILESTADIKQYLEEIARNRWSQQQMIVNNKFKQNYLERLAVLKALDVAWIEQVDNLQQLKTVVTSRSSGQHNPVFEYEKEAMHSFEQMKKLFWKNTVKYMLLSELIPGKNGSVRVEFP.

Residues Q79, 97–101 (GEGKT), and D487 each bind ATP.

This sequence belongs to the SecA family. As to quaternary structure, monomer and homodimer. Part of the essential Sec protein translocation apparatus which comprises SecA, SecYEG and auxiliary proteins SecDF. Other proteins may also be involved.

The protein resides in the cell membrane. It is found in the cytoplasm. The catalysed reaction is ATP + H2O + cellular proteinSide 1 = ADP + phosphate + cellular proteinSide 2.. Functionally, part of the Sec protein translocase complex. Interacts with the SecYEG preprotein conducting channel. Has a central role in coupling the hydrolysis of ATP to the transfer of proteins into and across the cell membrane, serving as an ATP-driven molecular motor driving the stepwise translocation of polypeptide chains across the membrane. This chain is Protein translocase subunit SecA 2, found in Pediococcus pentosaceus (strain ATCC 25745 / CCUG 21536 / LMG 10740 / 183-1w).